The following is a 45-amino-acid chain: DNA-directed RNA polymerase subunit Rpo12 (45 aa).

Residues C8, C23, and C26 each contribute to the Zn(2+) site.

Belongs to the archaeal Rpo12/eukaryotic RPC10 RNA polymerase subunit family. As to quaternary structure, part of the RNA polymerase complex. The cofactor is Zn(2+).

Its subcellular location is the cytoplasm. It carries out the reaction RNA(n) + a ribonucleoside 5'-triphosphate = RNA(n+1) + diphosphate. Functionally, DNA-dependent RNA polymerase (RNAP) catalyzes the transcription of DNA into RNA using the four ribonucleoside triphosphates as substrates. In Methanosarcina acetivorans (strain ATCC 35395 / DSM 2834 / JCM 12185 / C2A), this protein is DNA-directed RNA polymerase subunit Rpo12.